We begin with the raw amino-acid sequence, 421 residues long: Medium-chain specific acyl-CoA dehydrogenase, mitochondrial (421 aa).

The transit peptide at 1–25 (MAAAFRRGCRVLRSVSHFECRTQHS) directs the protein to the mitochondrion. Lysine 30 and lysine 69 each carry N6-acetyllysine; alternate. N6-succinyllysine; alternate is present on residues lysine 30 and lysine 69. N6-acetyllysine is present on lysine 79. 158–167 (YCVTEPSAGS) lines the FAD pocket. Serine 167 lines the octanoyl-CoA pocket. Lysine 179 is subject to N6-succinyllysine. 191 to 193 (WIT) lines the FAD pocket. The residue at position 212 (lysine 212) is an N6-acetyllysine; alternate. N6-succinyllysine; alternate is present on lysine 212. Residue serine 216 coordinates octanoyl-CoA. N6-acetyllysine; alternate occurs at positions 217, 235, 259, and 271. Lysine 217, lysine 235, lysine 259, and lysine 271 each carry N6-succinyllysine; alternate. Aspartate 278 and arginine 281 together coordinate octanoyl-CoA. Position 301 is an N6-acetyllysine (lysine 301). Residues 306–308 (RKT) and 316–317 (HQ) each bind FAD. Residues arginine 349 and threonine 351 each contribute to the octanoyl-CoA site. The residue at position 351 (threonine 351) is a Phosphothreonine. Position 374 to 378 (374 to 378 (QIFGG)) interacts with FAD. Glutamate 401 provides a ligand contact to octanoyl-CoA. Residue glutamate 401 is the Proton acceptor of the active site. FAD is bound at residue 402–405 (GTAQ).

It belongs to the acyl-CoA dehydrogenase family. As to quaternary structure, homotetramer. Interacts with the heterodimeric electron transfer flavoprotein ETF. FAD is required as a cofactor. Post-translationally, acetylated. Could occur at proximity of the cofactor-binding sites and reduce the catalytic activity. Could be deacetylated by SIRT3.

It is found in the mitochondrion matrix. It carries out the reaction a medium-chain 2,3-saturated fatty acyl-CoA + oxidized [electron-transfer flavoprotein] + H(+) = a medium-chain (2E)-enoyl-CoA + reduced [electron-transfer flavoprotein]. The catalysed reaction is pentanoyl-CoA + oxidized [electron-transfer flavoprotein] + H(+) = (2E)-pentenoyl-CoA + reduced [electron-transfer flavoprotein]. It catalyses the reaction hexanoyl-CoA + oxidized [electron-transfer flavoprotein] + H(+) = (2E)-hexenoyl-CoA + reduced [electron-transfer flavoprotein]. The enzyme catalyses octanoyl-CoA + oxidized [electron-transfer flavoprotein] + H(+) = (2E)-octenoyl-CoA + reduced [electron-transfer flavoprotein]. It carries out the reaction decanoyl-CoA + oxidized [electron-transfer flavoprotein] + H(+) = (2E)-decenoyl-CoA + reduced [electron-transfer flavoprotein]. The catalysed reaction is dodecanoyl-CoA + oxidized [electron-transfer flavoprotein] + H(+) = (2E)-dodecenoyl-CoA + reduced [electron-transfer flavoprotein]. It catalyses the reaction tetradecanoyl-CoA + oxidized [electron-transfer flavoprotein] + H(+) = (2E)-tetradecenoyl-CoA + reduced [electron-transfer flavoprotein]. The enzyme catalyses oxidized [electron-transfer flavoprotein] + hexadecanoyl-CoA + H(+) = (2E)-hexadecenoyl-CoA + reduced [electron-transfer flavoprotein]. It functions in the pathway lipid metabolism; mitochondrial fatty acid beta-oxidation. In terms of biological role, medium-chain specific acyl-CoA dehydrogenase is one of the acyl-CoA dehydrogenases that catalyze the first step of mitochondrial fatty acid beta-oxidation, an aerobic process breaking down fatty acids into acetyl-CoA and allowing the production of energy from fats. The first step of fatty acid beta-oxidation consists in the removal of one hydrogen from C-2 and C-3 of the straight-chain fatty acyl-CoA thioester, resulting in the formation of trans-2-enoyl-CoA. Electron transfer flavoprotein (ETF) is the electron acceptor that transfers electrons to the main mitochondrial respiratory chain via ETF-ubiquinone oxidoreductase (ETF dehydrogenase). Among the different mitochondrial acyl-CoA dehydrogenases, medium-chain specific acyl-CoA dehydrogenase acts specifically on acyl-CoAs with saturated 6 to 12 carbons long primary chains. In Mus musculus (Mouse), this protein is Medium-chain specific acyl-CoA dehydrogenase, mitochondrial.